The chain runs to 930 residues: MSKKRLYEIAKELGKESKEVVARAKELGLDVKSHSSSVEEAVAAKIAASFKPAAAPKVEAKPAAPKVSAEKKAEKSEPAKPAVAKEEAKPAEPVAPKTEKVAAKPQSRNFKAEREARAKEQAERRKQNKGNNRDQQQNGNRQKNDGRNGGKQGQSNRDNRRFNDQAKKQQGQQKRRNERRQQEDKRSNQVAPRIDFKARAAALKAEQNAEYARSSEERFKQYQAAKEALAQANKRKEPEEIFEEAAKLAEQAQQVQAVVEVVPEKKEPAVDTRRKKQARPDKNRDDYDHEEDGPRKQQKNRSSQNQVRNQKNSNWNNNKKNKKGNNKNNRNQTPKPVTERKFHELPTEFEYTDGMTVAEIAKRIKREPAEIVKKLFMMGVMATQNQSLDGETIELLMVDYGIEAKQKVEVDNADIERFFVEDGYLNEDELVERPPVVTIMGHVDHGKTTLLDTLRNSRVATGEAGGITQHIGAYQIVENGKKITFLDTPGHAAFTSMRARGASVTDITILVVAADDGVMPQTIEAINHSKAANVPIIVAINKIDKPGANPERVIGELAEHGVMSTAWGGDSEFVEISAKFNQNIEELLETVLLVAEIQELKADPTVRAIGTVIEARLDKGKGAVATLLVQQGTLNVQDPIVVGNTFGRVRAMTNDLGRRVKVAGPSTPVSITGLNEAPMAGDHFAVYEDEKSARAAGEERAKRALMKQRQATQRVSLENLFDTLKAGELKSVNVIIKADVQGSVEALSASLQKIDVEGVKVTIVHSAVGAINESDVTLAEASNAFIVGFNVRPTPQARQQAEADDVEIRLHSIIYKVIEEMEEAMKGMLDPEFEEKVIGEAVIRETFKVSKVGTIGGFMVINGKVARDSKVRVIRDGVVIYDGELASLKHYKDDVKEVTNGREGGLMIDGYNDIKMDDVIEAYVMEEIKR.

Over residues 50–67 (FKPAAAPKVEAKPAAPKV) the composition is skewed to low complexity. 2 disordered regions span residues 50 to 217 (FKPA…SSEE) and 260 to 346 (EVVP…HELP). Basic and acidic residues-rich tracts occupy residues 68-90 (SAEKKAEKSEPAKPAVAKEEAKP) and 110-125 (FKAEREARAKEQAERR). Residues 129–141 (KGNNRDQQQNGNR) show a composition bias toward low complexity. Basic and acidic residues-rich tracts occupy residues 157-167 (RDNRRFNDQAK) and 262-295 (VPEKKEPAVDTRRKKQARPDKNRDDYDHEEDGPR). Residues 309-318 (NQKNSNWNNN) show a composition bias toward low complexity. Residues 337 to 346 (VTERKFHELP) are compositionally biased toward basic and acidic residues. Positions 432 to 599 (ERPPVVTIMG…TVLLVAEIQE (168 aa)) constitute a tr-type G domain. The G1 stretch occupies residues 441-448 (GHVDHGKT). 441–448 (GHVDHGKT) lines the GTP pocket. The tract at residues 466-470 (GITQH) is G2. The tract at residues 487–490 (DTPG) is G3. GTP contacts are provided by residues 487–491 (DTPGH) and 541–544 (NKID). The interval 541 to 544 (NKID) is G4. The G5 stretch occupies residues 577-579 (SAK).

The protein belongs to the TRAFAC class translation factor GTPase superfamily. Classic translation factor GTPase family. IF-2 subfamily.

It localises to the cytoplasm. Functionally, one of the essential components for the initiation of protein synthesis. Protects formylmethionyl-tRNA from spontaneous hydrolysis and promotes its binding to the 30S ribosomal subunits. Also involved in the hydrolysis of GTP during the formation of the 70S ribosomal complex. The protein is Translation initiation factor IF-2 of Streptococcus pneumoniae (strain CGSP14).